We begin with the raw amino-acid sequence, 435 residues long: ATP-dependent protease ATPase subunit HslU (435 aa).

Residues I18, 60–65, D248, E313, and R385 each bind ATP; that span reads GVGKTE.

This sequence belongs to the ClpX chaperone family. HslU subfamily. In terms of assembly, a double ring-shaped homohexamer of HslV is capped on each side by a ring-shaped HslU homohexamer. The assembly of the HslU/HslV complex is dependent on binding of ATP.

The protein resides in the cytoplasm. In terms of biological role, ATPase subunit of a proteasome-like degradation complex; this subunit has chaperone activity. The binding of ATP and its subsequent hydrolysis by HslU are essential for unfolding of protein substrates subsequently hydrolyzed by HslV. HslU recognizes the N-terminal part of its protein substrates and unfolds these before they are guided to HslV for hydrolysis. This is ATP-dependent protease ATPase subunit HslU from Rhizobium etli (strain CIAT 652).